Consider the following 66-residue polypeptide: Large ribosomal subunit protein uL30 (66 aa).

Belongs to the universal ribosomal protein uL30 family. In terms of assembly, part of the 50S ribosomal subunit.

In Brucella anthropi (strain ATCC 49188 / DSM 6882 / CCUG 24695 / JCM 21032 / LMG 3331 / NBRC 15819 / NCTC 12168 / Alc 37) (Ochrobactrum anthropi), this protein is Large ribosomal subunit protein uL30.